We begin with the raw amino-acid sequence, 73 residues long: Conotoxin Lt9a (73 aa).

The N-terminal stretch at 1–23 (MTLTKSAVLILVLLLAFDNFADV) is a signal peptide. Residues 24–40 (QPGLITMGGGRLSNLLS) constitute a propeptide that is removed on maturation. Disulfide bonds link C48/C62, C53/C64, and C59/C69.

The protein belongs to the conotoxin P superfamily. In terms of tissue distribution, expressed by the venom duct.

The protein localises to the secreted. Probable neurotoxin that inhibits ion channels. This chain is Conotoxin Lt9a, found in Conus litteratus (Lettered cone).